The primary structure comprises 260 residues: Snake venom serine proteinase 12 (260 aa).

The N-terminal stretch at 1-18 (MVLIRVLANLLILQLSYA) is a signal peptide. Residues 19–24 (QKSSEL) constitute a propeptide that is removed on maturation. Residues 25 to 251 (VIGGDECNIN…HLDWIQSIIA (227 aa)) form the Peptidase S1 domain. 6 disulfide bridges follow: Cys31–Cys163, Cys50–Cys66, Cys98–Cys258, Cys142–Cys212, Cys174–Cys191, and Cys202–Cys227. His65 (charge relay system) is an active-site residue. Asn103 carries an N-linked (GlcNAc...) asparagine glycan. Asp110 serves as the catalytic Charge relay system. Ser206 acts as the Charge relay system in catalysis.

Belongs to the peptidase S1 family. Snake venom subfamily. As to quaternary structure, monomer. Expressed by the venom gland.

The protein resides in the secreted. Its function is as follows. Snake venom serine protease that may act in the hemostasis system of the prey. The sequence is that of Snake venom serine proteinase 12 from Crotalus adamanteus (Eastern diamondback rattlesnake).